The following is a 44-amino-acid chain: Photosystem I reaction center subunit IX (44 aa).

Residues 7–27 (YLSVAPVLSTLWFGALAGLLI) form a helical membrane-spanning segment.

Belongs to the PsaJ family.

It localises to the plastid. Its subcellular location is the chloroplast thylakoid membrane. May help in the organization of the PsaE and PsaF subunits. The polypeptide is Photosystem I reaction center subunit IX (Solanum bulbocastanum (Wild potato)).